The primary structure comprises 294 residues: Glutamyl-Q tRNA(Asp) synthetase (294 aa).

L-glutamate is bound by residues 8–12 and Glu44; that span reads RFAPT. Positions 11-21 match the 'HIGH' region motif; that stretch reads PTPSGYLHFGS. Cys100, Cys102, Tyr114, and Cys118 together coordinate Zn(2+). Residues Tyr171 and Arg189 each contribute to the L-glutamate site. A 'KMSKS' region motif is present at residues 227 to 231; it reads KLGKS. Lys230 contributes to the ATP binding site.

Belongs to the class-I aminoacyl-tRNA synthetase family. GluQ subfamily. Zn(2+) is required as a cofactor.

Catalyzes the tRNA-independent activation of glutamate in presence of ATP and the subsequent transfer of glutamate onto a tRNA(Asp). Glutamate is transferred on the 2-amino-5-(4,5-dihydroxy-2-cyclopenten-1-yl) moiety of the queuosine in the wobble position of the QUC anticodon. This Ectopseudomonas mendocina (strain ymp) (Pseudomonas mendocina) protein is Glutamyl-Q tRNA(Asp) synthetase.